The sequence spans 387 residues: MKALHFGAGNIGRGFIGKLLADAGAQLTFADVNQPLLDALNKRKRYQVNVVGEQARVEEVKNVSAVNSGSPEVVALIAEADIVTTAVGPQILARIAATVAQGLITRHQQGNTRPLNIIACENMVRGTSQLKQHVFAALSEDEQIWVEQHVGFVDSAVDRIVPPSEAGSTDILAVTVETFSEWIVDGTQFKGQPPEIVGMELTDNLMAFVERKLFTLNTGHAITAYLGQLAGHQTIRDAILDPAVRQTVKGAMEESGAVLIKRYAFDPQKHAAYINKILSRFENPYLHDDVERVGRQPLRKLSAGDRLIKPLLGTLEYQLPHDSLVTGIAAAMSYRSEQDPQAQELVTLLAQLGPKAALAQISGLPADSEVVEQAVSVYNAMQQKLAH.

Residue 3-14 (ALHFGAGNIGRG) coordinates NAD(+).

The protein belongs to the mannitol dehydrogenase family.

The catalysed reaction is D-mannitol 1-phosphate + NAD(+) = beta-D-fructose 6-phosphate + NADH + H(+). In Yersinia pseudotuberculosis serotype O:3 (strain YPIII), this protein is Mannitol-1-phosphate 5-dehydrogenase.